Reading from the N-terminus, the 143-residue chain is Small ribosomal subunit protein uS11c (143 aa).

This sequence belongs to the universal ribosomal protein uS11 family. In terms of assembly, part of the 30S ribosomal subunit.

It is found in the plastid. The protein resides in the chloroplast. The polypeptide is Small ribosomal subunit protein uS11c (Oryza nivara (Indian wild rice)).